The primary structure comprises 190 residues: Guanylate kinase (190 aa).

Positions 8-186 (ARPTVLTGPS…ALAELEKQMN (179 aa)) constitute a Guanylate kinase-like domain. Residue 15-22 (GPSGVGKG) coordinates ATP.

The protein belongs to the guanylate kinase family.

It localises to the cytoplasm. The enzyme catalyses GMP + ATP = GDP + ADP. The catalysed reaction is dZMP + ATP = dZDP + ADP. The protein operates within purine metabolism. Essential for recycling GMP and indirectly, cGMP. In terms of biological role, (Microbial infection) Catalyzes the phosphorylation of dZMP to dZDP, when the bacterium is infected by a phage that produces the substrate for the synthesis of dZTP (2- amino-2'-deoxyadenosine 5'-triphosphate), which is then used by the phage as a DNA polymerase substrate. This chain is Guanylate kinase, found in Synechococcus sp. (strain CC9311).